Here is a 128-residue protein sequence, read N- to C-terminus: Azurin (128 aa).

The 128-residue stretch at 1–128 folds into the Plastocyanin-like domain; sequence AECKVTVDST…SMMKGTVTVK (128 aa). A disulfide bond links Cys3 and Cys26. Residues His46, Cys112, His117, and Met121 each coordinate Cu cation.

Its subcellular location is the periplasm. In terms of biological role, transfers electrons from cytochrome c551 to cytochrome oxidase. The sequence is that of Azurin from Pseudomonas fluorescens biotype A.